The chain runs to 101 residues: Small ribosomal subunit protein uS14 (101 aa).

It belongs to the universal ribosomal protein uS14 family. As to quaternary structure, part of the 30S ribosomal subunit. Contacts proteins S3 and S10.

In terms of biological role, binds 16S rRNA, required for the assembly of 30S particles and may also be responsible for determining the conformation of the 16S rRNA at the A site. The sequence is that of Small ribosomal subunit protein uS14 from Colwellia psychrerythraea (strain 34H / ATCC BAA-681) (Vibrio psychroerythus).